The chain runs to 273 residues: Outer surface protein A (273 aa).

Residues 1-16 (MKKYLLGIGLILALIA) form the signal peptide. A lipid anchor (N-palmitoyl cysteine) is attached at C17. C17 carries the S-diacylglycerol cysteine lipid modification.

The protein belongs to the OspA lipoprotein family.

It localises to the cell outer membrane. The protein localises to the cell surface. The chain is Outer surface protein A from Borreliella burgdorferi (strain N40) (Borrelia burgdorferi).